A 241-amino-acid chain; its full sequence is Ribonuclease PH (241 aa).

Residues R90 and 128 to 130 (GTR) contribute to the phosphate site.

The protein belongs to the RNase PH family. As to quaternary structure, homohexameric ring arranged as a trimer of dimers.

It catalyses the reaction tRNA(n+1) + phosphate = tRNA(n) + a ribonucleoside 5'-diphosphate. Functionally, phosphorolytic 3'-5' exoribonuclease that plays an important role in tRNA 3'-end maturation. Removes nucleotide residues following the 3'-CCA terminus of tRNAs; can also add nucleotides to the ends of RNA molecules by using nucleoside diphosphates as substrates, but this may not be physiologically important. Probably plays a role in initiation of 16S rRNA degradation (leading to ribosome degradation) during starvation. This Corynebacterium diphtheriae (strain ATCC 700971 / NCTC 13129 / Biotype gravis) protein is Ribonuclease PH.